The primary structure comprises 262 residues: Short-chain reductase protein NovJ (262 aa).

NADP(+) is bound by residues 23–26 (GAGR) and 73–74 (DV). Substrate is bound at residue serine 152. The active-site Proton acceptor is the tyrosine 164. An NADP(+)-binding site is contributed by 164-168 (YATAK).

This sequence belongs to the short-chain dehydrogenases/reductases (SDR) family. Heterotetramer; the NovJ(2)K(2) heterotetramer is composed of subunits of 2 NovJ and 2 subunits of NovK.

It participates in antibiotic biosynthesis; novobiocin biosynthesis. Catalytic subunit of the NovJ(2)K(2) heterotetramer that catalyzes the NADPH-dependent reduction of the tyrosyl moiety of L-beta-OH-Tyr-S-NovH intermediate to yield the tethered beta-ketotyrosyl-S-NovH in the novobiocin biosynthesis pathway. Novobiocin is an aminocoumarin family antibiotic that targets bacterial DNA gyrases. This Streptomyces niveus (Streptomyces spheroides) protein is Short-chain reductase protein NovJ (novJ).